The sequence spans 427 residues: 3-phosphoshikimate 1-carboxyvinyltransferase (427 aa).

Lys22, Ser23, and Arg27 together coordinate 3-phosphoshikimate. Lys22 provides a ligand contact to phosphoenolpyruvate. Positions 96 and 124 each coordinate phosphoenolpyruvate. 7 residues coordinate 3-phosphoshikimate: Ser169, Ser170, Gln171, Ser197, Asp313, Asn336, and Lys340. Gln171 is a binding site for phosphoenolpyruvate. Asp313 functions as the Proton acceptor in the catalytic mechanism. Phosphoenolpyruvate contacts are provided by Arg344, Arg386, and Lys411.

It belongs to the EPSP synthase family. As to quaternary structure, monomer.

Its subcellular location is the cytoplasm. The enzyme catalyses 3-phosphoshikimate + phosphoenolpyruvate = 5-O-(1-carboxyvinyl)-3-phosphoshikimate + phosphate. It functions in the pathway metabolic intermediate biosynthesis; chorismate biosynthesis; chorismate from D-erythrose 4-phosphate and phosphoenolpyruvate: step 6/7. Catalyzes the transfer of the enolpyruvyl moiety of phosphoenolpyruvate (PEP) to the 5-hydroxyl of shikimate-3-phosphate (S3P) to produce enolpyruvyl shikimate-3-phosphate and inorganic phosphate. This chain is 3-phosphoshikimate 1-carboxyvinyltransferase, found in Salmonella choleraesuis (strain SC-B67).